The chain runs to 367 residues: Putative F-box/kelch-repeat protein At4g39600 (367 aa).

The F-box domain occupies 11-57; the sequence is ATSNPSLPEDLVVSCLARVSRLYYPTLSLVSKSFRSLIASPDLYKTR. 2 Kelch repeats span residues 127-171 and 172-216; these read HLYA…LDGK and MYLA…EGKI.

The polypeptide is Putative F-box/kelch-repeat protein At4g39600 (Arabidopsis thaliana (Mouse-ear cress)).